A 131-amino-acid polypeptide reads, in one-letter code: Global transcriptional regulator Spx (131 aa).

Residues 10–13 carry the CXXC motif; that stretch reads CTSC. The cysteines at positions 10 and 13 are disulfide-linked.

It belongs to the ArsC family. Spx subfamily. As to quaternary structure, interacts with the C-terminal domain of the alpha subunit of the RNAP. A single Spx monomer interacts with RNAP to form the transcription activation complex. Interacts with the adapter protein SpxH/YjbH.

It is found in the cytoplasm. Under non-stress conditions, Spx is degraded by ClpXP and, to a lesser extent, by ClpCP. Efficient dedradation by ClpXP requires the adapter protein SpxH/YjbH. Binding to SpxH/YjbH reduces the overall conformational flexibility of Spx and stabilizes the C-terminal ClpX recognition region of Spx. In addition, activity is modulated by the formation of a disulfide bound within the N-terminal Cys-X-X-Cys (CXXC) motif, which is required for the transcriptional activation of trxA and trxB, or for the activation of msrAB operon expression following paraquat oxidative stress. However, it seems that formation of the disulfide bound is not essential for induction of all Spx-controlled genes, as for example the case of BSH biosynthesis genes. Similarly, induction of the Spx regulon during cell wall stress is not accompanied by oxidation of the disulfide switch, but requires Spx stabilization by the anti-adapter protein SpxO/YirB. Global transcriptional regulator that plays a key role in stress response and exerts either positive or negative regulation of genes. Acts by interacting with the C-terminal domain of the alpha subunit of the RNA polymerase (RNAP). This interaction can enhance binding of RNAP to the promoter region of target genes and stimulate their transcription, or block interaction of RNAP with activator proteins and repress transcription. Exhibits no DNA-binding activity. Its function is as follows. Induces the expression of a large number of genes in response to a variety of stress conditions, such as disulfide, heat and cell wall stress, while concurrently repressing transcription of genes involved in various developmental and growth-related pathways during periods of extreme stress. Functions in the oxidative stress response via induction of the transcription of thioredoxin (trxA) and thioredoxin reductase (trxB) during thiol-specific oxidative (disulfide) stress. Mediates response to oxidative stress caused by paraquat (PQ) via induction of the methionine sulfoxide reductase genes, msrA and msrB. Also acts as a transcriptional activator of the bacillithiol (BSH) biosynthesis genes in response to oxidizing conditions and thio-reactive compounds. Involved in heat stress response and thermotolerance development, which results in diminished cellular protein aggregates. Plays an important adaptive role in the cell wall stress response. Participates in sulfate-dependent control of organosulfur metabolism. Negatively controls, via CymR, the expression of the organosulfur utilization operons ytmI, yxeI and ssu, and directly activates yrrT operon expression during growth in medium containing methionine as sole sulfur source. Negatively affects competence and sporulation. Inhibits biofilm formation in response to disulfide stress by repressing biofilm matrix genes. In Bacillus subtilis (strain 168), this protein is Global transcriptional regulator Spx.